Consider the following 263-residue polypeptide: MARGPKKHLKRVAAPKHWMLDKLTGVFAPRPSTGPHKLRECLPLIIFLRNRLKYALTGDEVKKICMQRFIKIDGKVRTDTTYPVGFMDVISIEKTGEHFRLVYDTKGRFAVHRITAEEAKYKLCKVRKTFVGTKAIPHLVTHDARTIRYPDPLIKMNDTIQIDLETGKITDFIKFDTGNMCMVTGGANLGRIGVITNREKHPGSFDVVHVKDANGNSFATRLSNIFVIGKGNKPWISLPRGKGIRLTIAEERDKRLAAKQNNG.

The S4 RNA-binding domain occupies 42–104 (LPLIIFLRNR…TGEHFRLVYD (63 aa)). A Glycyl lysine isopeptide (Lys-Gly) (interchain with G-Cter in SUMO2) cross-link involves residue lysine 230. Lysine 233 bears the N6-acetyllysine mark.

It belongs to the eukaryotic ribosomal protein eS4 family. Component of the small ribosomal subunit. Part of the small subunit (SSU) processome, composed of more than 70 proteins and the RNA chaperone small nucleolar RNA (snoRNA) U3. Identified in a IGF2BP1-dependent mRNP granule complex containing untranslated mRNAs.

The protein resides in the cytoplasm. Its subcellular location is the nucleus. The protein localises to the nucleolus. Component of the small ribosomal subunit. The ribosome is a large ribonucleoprotein complex responsible for the synthesis of proteins in the cell. Part of the small subunit (SSU) processome, first precursor of the small eukaryotic ribosomal subunit. During the assembly of the SSU processome in the nucleolus, many ribosome biogenesis factors, an RNA chaperone and ribosomal proteins associate with the nascent pre-rRNA and work in concert to generate RNA folding, modifications, rearrangements and cleavage as well as targeted degradation of pre-ribosomal RNA by the RNA exosome. The polypeptide is Small ribosomal subunit protein eS4, X isoform (RPS4X) (Monodelphis domestica (Gray short-tailed opossum)).